A 606-amino-acid chain; its full sequence is Threonine--tRNA ligase (606 aa).

The tract at residues 212-503 (DHRKLGVEMK…LLEHTAGELP (292 aa)) is catalytic. Residues C304, H355, and H480 each coordinate Zn(2+).

Belongs to the class-II aminoacyl-tRNA synthetase family. Homodimer. Requires Zn(2+) as cofactor.

The protein resides in the cytoplasm. It catalyses the reaction tRNA(Thr) + L-threonine + ATP = L-threonyl-tRNA(Thr) + AMP + diphosphate + H(+). In terms of biological role, catalyzes the attachment of threonine to tRNA(Thr) in a two-step reaction: L-threonine is first activated by ATP to form Thr-AMP and then transferred to the acceptor end of tRNA(Thr). Also edits incorrectly charged L-seryl-tRNA(Thr). This Campylobacter concisus (strain 13826) protein is Threonine--tRNA ligase.